The sequence spans 296 residues: MRKFIFVLLTLLLVSPFSFAMKGIIWQPQNRDSQVTDTQWQGLMSQLRLQGFDTLVLQWTRYGDAFTQPEQRTLLFKRAAAAQQAGLKLIVGLNADPEFFMHQKQSSAALESYLNRLLAADLQQARLWSAAPGITPDGWYISAEIDDLNWRSEAARQPLLTWLNNAQRLISDVSAKPVYISSFFAGNMSPDGYRQLLEHVKATGVNVWVQDGSGVDKLTAEQRERYLQASADCQSPAPASGVVYELFVAGKGKTFTAKPKPDAEIASLLAKRSSCGKDTLYFSLRYLPVAHGILEY.

The N-terminal stretch at 1-20 (MRKFIFVLLTLLLVSPFSFA) is a signal peptide.

This is an uncharacterized protein from Escherichia coli (strain K12).